We begin with the raw amino-acid sequence, 432 residues long: Glutamate-1-semialdehyde 2,1-aminomutase 1 (432 aa).

N6-(pyridoxal phosphate)lysine is present on K268.

This sequence belongs to the class-III pyridoxal-phosphate-dependent aminotransferase family. HemL subfamily. As to quaternary structure, homodimer. Pyridoxal 5'-phosphate is required as a cofactor.

It localises to the cytoplasm. It catalyses the reaction (S)-4-amino-5-oxopentanoate = 5-aminolevulinate. It participates in porphyrin-containing compound metabolism; protoporphyrin-IX biosynthesis; 5-aminolevulinate from L-glutamyl-tRNA(Glu): step 2/2. This Bacillus licheniformis (strain ATCC 14580 / DSM 13 / JCM 2505 / CCUG 7422 / NBRC 12200 / NCIMB 9375 / NCTC 10341 / NRRL NRS-1264 / Gibson 46) protein is Glutamate-1-semialdehyde 2,1-aminomutase 1.